We begin with the raw amino-acid sequence, 632 residues long: U-box domain-containing protein 14 (632 aa).

A U-box domain is found at 247–321 (VIPEYFRCPI…ALWCESNGIE (75 aa)). 5 ARM repeats span residues 377–416 (VDNR…NLSI), 418–457 (EGNK…SLSV), 459–498 (DENK…NLCI), 500–539 (QGNK…ILST), and 541–580 (QEGK…YLCI).

In terms of assembly, homodimer. Interacts with SNL1. Binds to SD11, SD16, SD17, SD18, SD113, SD129 and SD25. As to expression, expressed in flowers, green siliques, seeds and rosette leaves.

The enzyme catalyses S-ubiquitinyl-[E2 ubiquitin-conjugating enzyme]-L-cysteine + [acceptor protein]-L-lysine = [E2 ubiquitin-conjugating enzyme]-L-cysteine + N(6)-ubiquitinyl-[acceptor protein]-L-lysine.. The protein operates within protein modification; protein ubiquitination. Functions as an E3 ubiquitin ligase with specific E2 ubiquitin-conjugating enzymes. Undergoes auto-ubiquitination. This chain is U-box domain-containing protein 14 (PUB14), found in Arabidopsis thaliana (Mouse-ear cress).